Here is a 397-residue protein sequence, read N- to C-terminus: Phosphoglycerate kinase (397 aa).

Residues 26–28 (DLN), Arg42, 65–68 (HLGR), Arg119, and Arg152 each bind substrate. ATP-binding positions include Lys203, Glu325, and 351–354 (GGDT).

It belongs to the phosphoglycerate kinase family. As to quaternary structure, monomer.

It localises to the cytoplasm. The enzyme catalyses (2R)-3-phosphoglycerate + ATP = (2R)-3-phospho-glyceroyl phosphate + ADP. Its pathway is carbohydrate degradation; glycolysis; pyruvate from D-glyceraldehyde 3-phosphate: step 2/5. This is Phosphoglycerate kinase from Bordetella pertussis (strain Tohama I / ATCC BAA-589 / NCTC 13251).